Here is a 333-residue protein sequence, read N- to C-terminus: Acyl-CoA wax alcohol acyltransferase 2 (333 aa).

Helical transmembrane passes span 15 to 35 (VFAV…VIAV), 38 to 58 (YLVV…WLAF), and 130 to 150 (IFPG…MPFL).

It belongs to the diacylglycerol acyltransferase family. Monomer. As to expression, highly expressed in skin, where it is primarily restricted to undifferentiated peripheral sebocytes. Also expressed at lower level in other tissues except pancreas.

The protein resides in the endoplasmic reticulum membrane. It carries out the reaction a long chain fatty alcohol + a fatty acyl-CoA = a wax ester + CoA. The catalysed reaction is all-trans-retinol + an acyl-CoA = an all-trans-retinyl ester + CoA. It catalyses the reaction an acyl-CoA + a 1,2-diacyl-sn-glycerol = a triacyl-sn-glycerol + CoA. The enzyme catalyses 11-cis-retinol + a fatty acyl-CoA = 11-cis-retinyl ester + CoA. It carries out the reaction 9-cis-retinol + a fatty acyl-CoA = 9-cis-retinyl ester + CoA. The catalysed reaction is 13-cis-retinol + a fatty acyl-CoA = 13-cis-retinyl ester + CoA. It catalyses the reaction a 1-acylglycerol + an acyl-CoA = a 1,2-diacylglycerol + CoA. The enzyme catalyses 1-O-alkylglycerol + an acyl-CoA = 1-O-alkyl-3-acylglycerol + CoA. It carries out the reaction a 2-acylglycerol + an acyl-CoA = a 1,2-diacyl-sn-glycerol + CoA. The catalysed reaction is 2-(9Z-octadecenoyl)-glycerol + hexadecanoyl-CoA = 1-hexadecanoyl-2-(9Z-octadecenoyl)-sn-glycerol + CoA. It catalyses the reaction 1,2-di-(9Z-octadecenoyl)-sn-glycerol + hexadecanoyl-CoA = 1,2-di-(9Z)-octadecenoyl-3-hexadecanoyl-sn-glycerol + CoA. The enzyme catalyses hexadecan-1-ol + hexadecanoyl-CoA = hexadecanyl hexadecanoate + CoA. It carries out the reaction hexadecane-1,2-diol + hexadecanoyl-CoA = 2-hydroxyhexadecyl hexadecanoate + CoA. The catalysed reaction is 9-cis-retinol + hexadecanoyl-CoA = 9-cis-retinyl hexadecanoate + CoA. It catalyses the reaction all-trans-retinol + hexadecanoyl-CoA = all-trans-retinyl hexadecanoate + CoA. The enzyme catalyses 1,2-di-(9Z-octadecenoyl)-sn-glycerol + (9Z)-octadecenoyl-CoA = 1,2,3-tri-(9Z-octadecenoyl)-glycerol + CoA. It carries out the reaction hexadecan-1-ol + (9Z)-octadecenoyl-CoA = hexadecanyl (9Z)-octadecenoate + CoA. The catalysed reaction is (9Z)-hexadecen-1-ol + (9Z)-octadecenoyl-CoA = 1-O-(9Z)-hexadecenyl (9Z)-octadecenoate + CoA. It catalyses the reaction octadecan-1-ol + (9Z)-octadecenoyl-CoA = 1-O-octadecyl (9Z)-octadecenoate + CoA. The enzyme catalyses (9Z)-octadecen-1-ol + (9Z)-octadecenoyl-CoA = 1-O-(9Z)-octadecenyl (9Z)-octadecenoate + CoA. It carries out the reaction hexadecan-1-ol + (9Z)-hexadecenoyl-CoA = 1-O-hexadecyl (9Z)-hexadecenoate + CoA. The catalysed reaction is hexadecan-1-ol + octadecanoyl-CoA = hexadecanyl octadecanoate + CoA. It catalyses the reaction 11-cis-retinol + hexadecanoyl-CoA = 11-cis-retinyl hexadecanoate + CoA. The enzyme catalyses 1-O-(9Z-octadecenyl)-glycerol + (9Z)-octadecenoyl-CoA = 1-O-(9Z-octadecyl)-3-(9Z-octadecenoyl)-glycerol + CoA. It carries out the reaction 1-(9Z-octadecenoyl)-glycerol + (9Z)-octadecenoyl-CoA = 1,2-di-(9Z-octadecenoyl)-glycerol + CoA. The catalysed reaction is 11-cis-retinol + tetradecanoyl-CoA = 11-cis-retinyl tetradecanoate + CoA. It catalyses the reaction 9-cis-retinol + tetradecanoyl-CoA = 9-cis-retinyl tetradecanoate + CoA. The enzyme catalyses 13-cis-retinol + tetradecanoyl-CoA = 13-cis-retinyl tetradecanoate + CoA. It carries out the reaction all-trans-retinol + tetradecanoyl-CoA = all-trans-retinyl tetradecanoate + CoA. The catalysed reaction is tetradecan-1-ol + tetradecanoyl-CoA = tetradecanyl tetradecanoate + CoA. 11-cis retinoids act as allosteric modulators of acyl-CoA retinol O-fatty-acyltransferase (ARAT) activity by suppressing esterification of 9-cis, 13-cis, or all-trans retinols concurrently increasing the enzyme specificity toward 11-cis isomer. Functionally, acyltransferase that catalyzes the formation of ester bonds between fatty alcohols and fatty acyl-CoAs to form wax monoesters. Shows a preference for medium chain acyl-CoAs from C12 to C16 in length and fatty alcohols shorter than C20, as the acyl donors and acceptors, respectively. Also possesses acyl-CoA retinol acyltransferase (ARAT) activity that preferentially esterifies 11-cis-retinol, a chromophore precursor of bleached opsin pigments in cone cells. Shows higher catalytic efficiency toward 11-cis-retinol versus 9-cis-retinol, 13-cis-retinol, and all-trans-retinol substrates. The protein is Acyl-CoA wax alcohol acyltransferase 2 (AWAT2) of Homo sapiens (Human).